Consider the following 363-residue polypeptide: MNMFNAHIPSYLVPKNLNSNWNVGFILGILLILQILSGLLLTFFYVPCKEGAFESLSRLVTETQFGWFVRLYHSVGVSFYFFFMFIHIIKGMWYSSKYMPWSWYSGIVILILSIVIAFTGYVLPDGQMSFWGATVISNLLEWFGKAKVITFGGFTVGPETLKRFFILHFVLPAVVLVIVLLHLYFLHREGSSNPLTLAEAVALLKFYQLILFSDVKFLVIISMFIGPQVGYGIWTLFQADNDNSILSSSENTPAHIIPEWYLLLFYATLKVFPTKVSGLVAMVVVLKLLIILVESRSKSQAVSTAHHHRVWTTTSVPLVPALFLLGCIGRMVINLDLIIIGIYGVLLSTTFVQKLLDSSRVRA.

4 helical membrane-spanning segments follow: residues 23–43 (VGFI…LLTF), 67–89 (WFVR…IHII), 102–122 (SWYS…TGYV), and 164–184 (FFIL…LHLY). Residues H73 and H87 each coordinate heme b. Residues H168 and H182 each coordinate heme b. H187 serves as a coordination point for a ubiquinone. Helical transmembrane passes span 210-230 (ILFS…PQVG), 271-291 (VFPT…LLII), 309-329 (RVWT…GCIG), and 332-352 (VINL…TTFV).

The protein belongs to the cytochrome b family. In terms of assembly, the main subunits of complex b-c1 are: cytochrome b, cytochrome c1 and the Rieske protein. It depends on heme b as a cofactor.

Its subcellular location is the mitochondrion inner membrane. In terms of biological role, component of the ubiquinol-cytochrome c reductase complex (complex III or cytochrome b-c1 complex) that is part of the mitochondrial respiratory chain. The b-c1 complex mediates electron transfer from ubiquinol to cytochrome c. Contributes to the generation of a proton gradient across the mitochondrial membrane that is then used for ATP synthesis. The protein is Cytochrome b (MT-CYB) of Theileria parva (East coast fever infection agent).